Reading from the N-terminus, the 351-residue chain is Protein RecA (351 aa).

Position 73 to 80 (Gly-73 to Thr-80) interacts with ATP.

This sequence belongs to the RecA family.

It is found in the cytoplasm. Functionally, can catalyze the hydrolysis of ATP in the presence of single-stranded DNA, the ATP-dependent uptake of single-stranded DNA by duplex DNA, and the ATP-dependent hybridization of homologous single-stranded DNAs. It interacts with LexA causing its activation and leading to its autocatalytic cleavage. This is Protein RecA from Herbaspirillum seropedicae.